Reading from the N-terminus, the 232-residue chain is uncharacterized protein (232 aa).

This is an uncharacterized protein from Homo sapiens (Human).